Consider the following 157-residue polypeptide: Endoribonuclease YbeY (157 aa).

H114, H118, and H124 together coordinate Zn(2+).

It belongs to the endoribonuclease YbeY family. It depends on Zn(2+) as a cofactor.

The protein resides in the cytoplasm. Functionally, single strand-specific metallo-endoribonuclease involved in late-stage 70S ribosome quality control and in maturation of the 3' terminus of the 16S rRNA. The sequence is that of Endoribonuclease YbeY from Salmonella paratyphi A (strain AKU_12601).